Here is a 1119-residue protein sequence, read N- to C-terminus: DNA-directed RNA polymerase D subunit 2b (1119 aa).

Asp-732 is a Mg(2+) binding site. Zn(2+) is bound by residues Cys-1055, Cys-1058, Cys-1080, and Cys-1083. The segment at 1055 to 1083 (CRKCKTYANVIERTPSSGRKIRGPYCRVC) adopts a C4-type zinc-finger fold.

It belongs to the RNA polymerase beta chain family. As to quaternary structure, component of the RNA polymerase IVa and IVb (Pol IV) complexes.

It localises to the nucleus. The catalysed reaction is RNA(n) + a ribonucleoside 5'-triphosphate = RNA(n+1) + diphosphate. In terms of biological role, DNA-dependent RNA polymerase catalyzes the transcription of DNA into RNA using the four ribonucleoside triphosphates as substrates. Second largest component of RNA polymerase IVa and IVb which mediate short-interfering RNAs (siRNA) accumulation and subsequent RNA-directed DNA methylation-dependent (RdDM) silencing of endogenous repeated sequences, including transposable largest subunit. Also required for full erasure of methylation elements. Required for intercellular RNA interference (RNAi) leading to systemic post-transcriptional gene silencing. The sequence is that of DNA-directed RNA polymerase D subunit 2b (NRPD2b) from Arabidopsis thaliana (Mouse-ear cress).